Reading from the N-terminus, the 220-residue chain is Adenylate kinase (220 aa).

An ATP-binding site is contributed by 10–15 (GSGKST). Residues 30–59 (SSGDIIRAEISSRTPLGLEMEKYLSRGDLI) form an NMP region. Residues serine 31, arginine 36, 57-59 (DLI), 83-86 (GYPR), and glutamine 90 contribute to the AMP site. The interval 124 to 161 (GRRICSKCGAVYHIEFNPPKIPGKCDICGGDLIQRPDD) is LID. Arginine 125 contributes to the ATP binding site. Cysteine 128 and cysteine 131 together coordinate Zn(2+). Residue 134 to 135 (VY) participates in ATP binding. Positions 148 and 151 each coordinate Zn(2+). Arginine 158 and arginine 169 together coordinate AMP. Glycine 197 serves as a coordination point for ATP.

Belongs to the adenylate kinase family. In terms of assembly, monomer.

The protein localises to the cytoplasm. The catalysed reaction is AMP + ATP = 2 ADP. It participates in purine metabolism; AMP biosynthesis via salvage pathway; AMP from ADP: step 1/1. Functionally, catalyzes the reversible transfer of the terminal phosphate group between ATP and AMP. Plays an important role in cellular energy homeostasis and in adenine nucleotide metabolism. This is Adenylate kinase from Pyrococcus horikoshii (strain ATCC 700860 / DSM 12428 / JCM 9974 / NBRC 100139 / OT-3).